The primary structure comprises 483 residues: Glutamyl-tRNA(Gln) amidotransferase subunit A (483 aa).

Residues lysine 77 and serine 152 each act as charge relay system in the active site. Catalysis depends on serine 176, which acts as the Acyl-ester intermediate.

The protein belongs to the amidase family. GatA subfamily. Heterotrimer of A, B and C subunits.

The enzyme catalyses L-glutamyl-tRNA(Gln) + L-glutamine + ATP + H2O = L-glutaminyl-tRNA(Gln) + L-glutamate + ADP + phosphate + H(+). Its function is as follows. Allows the formation of correctly charged Gln-tRNA(Gln) through the transamidation of misacylated Glu-tRNA(Gln) in organisms which lack glutaminyl-tRNA synthetase. The reaction takes place in the presence of glutamine and ATP through an activated gamma-phospho-Glu-tRNA(Gln). This chain is Glutamyl-tRNA(Gln) amidotransferase subunit A, found in Shouchella clausii (strain KSM-K16) (Alkalihalobacillus clausii).